We begin with the raw amino-acid sequence, 352 residues long: tRNA pseudouridine synthase D (352 aa).

The active-site Nucleophile is D81. The TRUD domain occupies G157–L303.

Belongs to the pseudouridine synthase TruD family.

It catalyses the reaction uridine(13) in tRNA = pseudouridine(13) in tRNA. Functionally, responsible for synthesis of pseudouridine from uracil-13 in transfer RNAs. This chain is tRNA pseudouridine synthase D, found in Ectopseudomonas mendocina (strain ymp) (Pseudomonas mendocina).